A 496-amino-acid chain; its full sequence is Cytochrome P450 71A15 (496 aa).

A helical membrane pass occupies residues 3–23 (IIIISLCLATILAFLLLKPLL). C439 provides a ligand contact to heme.

Belongs to the cytochrome P450 family. Requires heme as cofactor.

It localises to the membrane. The sequence is that of Cytochrome P450 71A15 (CYP71A15) from Arabidopsis thaliana (Mouse-ear cress).